Here is a 598-residue protein sequence, read N- to C-terminus: Elongation factor 4 (598 aa).

In terms of domain architecture, tr-type G spans 2–183; it reads KNIRNFCIIA…AIINRVPAPS (182 aa). GTP contacts are provided by residues 14–19 and 130–133; these read DHGKST and NKVD.

Belongs to the TRAFAC class translation factor GTPase superfamily. Classic translation factor GTPase family. LepA subfamily.

It is found in the cell inner membrane. The enzyme catalyses GTP + H2O = GDP + phosphate + H(+). Required for accurate and efficient protein synthesis under certain stress conditions. May act as a fidelity factor of the translation reaction, by catalyzing a one-codon backward translocation of tRNAs on improperly translocated ribosomes. Back-translocation proceeds from a post-translocation (POST) complex to a pre-translocation (PRE) complex, thus giving elongation factor G a second chance to translocate the tRNAs correctly. Binds to ribosomes in a GTP-dependent manner. The sequence is that of Elongation factor 4 from Christiangramia forsetii (strain DSM 17595 / CGMCC 1.15422 / KT0803) (Gramella forsetii).